The following is a 156-amino-acid chain: MDKKVTEIVEAFAQPIVEELNLELVDVEYVQEGQDWFLRVFIDSEKGVEIEECGAVSERLSEALDKEDPIPHLYFLDVSSPGAERPLKKEKDFQQAVGKQVAIKTYKPIDGEKMFEGKLLSYDGNTITLLLTIKTRKKEIQIPMDKVANARLAVTF.

The protein belongs to the RimP family.

It is found in the cytoplasm. Its function is as follows. Required for maturation of 30S ribosomal subunits. This is Ribosome maturation factor RimP from Bacillus mycoides (strain KBAB4) (Bacillus weihenstephanensis).